The primary structure comprises 58 residues: Large ribosomal subunit protein bL32 (58 aa).

This sequence belongs to the bacterial ribosomal protein bL32 family.

The chain is Large ribosomal subunit protein bL32 from Caldicellulosiruptor saccharolyticus (strain ATCC 43494 / DSM 8903 / Tp8T 6331).